The primary structure comprises 28 residues: Cysteine-rich venom protein asurin-2 (28 aa).

The segment covering 1 to 15 has biased composition (basic and acidic residues); sequence SNKKDYRKEIVDKHN. The interval 1–28 is disordered; the sequence is SNKKDYRKEIVDKHNALSRSVKPTASNM. Residues 17 to 28 are compositionally biased toward polar residues; that stretch reads LSRSVKPTASNM.

It belongs to the CRISP family. In terms of processing, contains 8 disulfide bonds. In terms of tissue distribution, expressed by the venom gland.

Its subcellular location is the secreted. In terms of biological role, blocks contraction of smooth muscle elicited by high potassium-induced depolarization, but does not block caffeine-stimulated contraction. May target voltage-gated calcium channels on smooth muscle. This is Cysteine-rich venom protein asurin-2 from Austrelaps superbus (Lowland copperhead snake).